The primary structure comprises 99 residues: (4S)-4-hydroxy-5-phosphonooxypentane-2,3-dione isomerase (99 aa).

Residues 2-91 (HVTLVEINVK…ISEPRKKRSF (90 aa)) enclose the ABM domain.

It belongs to the LsrG family. As to quaternary structure, homodimer.

It is found in the cytoplasm. It carries out the reaction (2S)-2-hydroxy-3,4-dioxopentyl phosphate = 3-hydroxy-2,4-dioxopentyl phosphate. Involved in the degradation of phospho-AI-2, thereby terminating induction of the lsr operon and closing the AI-2 signaling cycle. Catalyzes the conversion of (4S)-4-hydroxy-5-phosphonooxypentane-2,3-dione (P-DPD) to 3-hydroxy-5-phosphonooxypentane-2,4-dione (P-HPD). The polypeptide is (4S)-4-hydroxy-5-phosphonooxypentane-2,3-dione isomerase (Photorhabdus laumondii subsp. laumondii (strain DSM 15139 / CIP 105565 / TT01) (Photorhabdus luminescens subsp. laumondii)).